The following is a 249-amino-acid chain: 3alpha-hydroxy bile acid-CoA-ester 3-dehydrogenase 1/3 (249 aa).

NAD(+)-binding positions include 15–18 (TRGI), E38, E42, and N92. Residue S144 coordinates substrate. Residues Y157 and K161 each act as proton donor/acceptor in the active site. NAD(+)-binding positions include K161 and 190–192 (VDT).

The protein belongs to the short-chain dehydrogenases/reductases (SDR) family. As to quaternary structure, homotetramer.

It carries out the reaction a 3alpha-hydroxy bile acid CoA + NAD(+) = a 3-oxo bile acid CoA + NADH + H(+). The catalysed reaction is choloyl-CoA + NAD(+) = 7alpha,12alpha-dihydroxy-3-oxochol-24-oyl-CoA + NADH + H(+). It catalyses the reaction chenodeoxycholoyl-CoA + NAD(+) = 7alpha-hydroxy-3-oxochol-24-oyl-CoA + NADH + H(+). The enzyme catalyses deoxycholoyl-CoA + NAD(+) = 12alpha-hydroxy-3-oxocholan-24-oyl-CoA + NADH + H(+). It carries out the reaction lithocholoyl-CoA + NAD(+) = 3-oxocholan-24-oyl-CoA + NADH + H(+). It participates in lipid metabolism; bile acid biosynthesis. Its function is as follows. Involved in the multi-step bile acid 7alpha-dehydroxylation pathway that transforms primary bile acids to secondary bile acids in the human gut. Catalyzes the oxidation of C3-hydroxyl group of CoA conjugated bile acids generating a C3-oxo bile acid intermediate. Can use choloyl-CoA, chenodeoxycholoyl-CoA, deoxycholoyl-CoA, and lithocholoyl-CoA as substrates with similar efficiency. Highly prefers NAD over NADP as cosubstrate. Also catalyzes the reverse reactions; in vitro, the preferred direction of reaction depends on the pH. Has very little activity with unconjugated (non-CoA) bile acid substrates. The protein is 3alpha-hydroxy bile acid-CoA-ester 3-dehydrogenase 1/3 (baiA1) of Clostridium scindens (strain JCM 10418 / VPI 12708).